The following is a 450-amino-acid chain: Interferon-induced protein 75 (450 aa).

In terms of domain architecture, HSR spans 1–108 (MFTLTKALEK…IFRSFRNVGY (108 aa)). Disordered regions lie at residues 131–156 (CSLQ…APRV) and 170–225 (LDEQ…VKDD). Residues 143–154 (QLSLPSHLSSAP) are compositionally biased toward low complexity. Phosphoserine occurs at positions 175 and 177. Residues 197 to 212 (SRDHQRKDKEDSREMP) show a composition bias toward basic and acidic residues. Ser-226 carries the phosphoserine modification. 2 disordered regions span residues 238–283 (VLCT…HGVQ) and 318–360 (AQTS…KNDA). Positions 245–267 (KKARRKKRLNWSNSKRGRQKKKP) are enriched in basic residues. The Nuclear localization signal signature appears at 251 to 266 (KRLNWSNSKRGRQKKK). Residues 343-353 (TSTAGKTTQVP) are compositionally biased toward polar residues. Residues 358 to 439 (NDAVDFLSPT…RQLEQKGLLF (82 aa)) enclose the SAND domain.

Its subcellular location is the nucleus. This chain is Interferon-induced protein 75 (Ifi75), found in Mus caroli (Ryukyu mouse).